Here is a 251-residue protein sequence, read N- to C-terminus: Triosephosphate isomerase (251 aa).

8–10 (NWK) lines the substrate pocket. The active-site Electrophile is the histidine 97. The active-site Proton acceptor is glutamate 170. Substrate is bound by residues glycine 176, serine 215, and 236 to 237 (GG).

Belongs to the triosephosphate isomerase family. In terms of assembly, homodimer.

It is found in the cytoplasm. It catalyses the reaction D-glyceraldehyde 3-phosphate = dihydroxyacetone phosphate. Its pathway is carbohydrate biosynthesis; gluconeogenesis. It participates in carbohydrate degradation; glycolysis; D-glyceraldehyde 3-phosphate from glycerone phosphate: step 1/1. Its function is as follows. Involved in the gluconeogenesis. Catalyzes stereospecifically the conversion of dihydroxyacetone phosphate (DHAP) to D-glyceraldehyde-3-phosphate (G3P). The chain is Triosephosphate isomerase from Nitratidesulfovibrio vulgaris (strain ATCC 29579 / DSM 644 / CCUG 34227 / NCIMB 8303 / VKM B-1760 / Hildenborough) (Desulfovibrio vulgaris).